Consider the following 217-residue polypeptide: Small ribosomal subunit protein uS3 (217 aa).

The KH type-2 domain maps to 38-106 (IRKFINKELA…QVHINIIEIK (69 aa)).

This sequence belongs to the universal ribosomal protein uS3 family. Part of the 30S ribosomal subunit. Forms a tight complex with proteins S10 and S14.

Functionally, binds the lower part of the 30S subunit head. Binds mRNA in the 70S ribosome, positioning it for translation. The chain is Small ribosomal subunit protein uS3 from Streptococcus pyogenes serotype M6 (strain ATCC BAA-946 / MGAS10394).